Here is a 147-residue protein sequence, read N- to C-terminus: Nucleoside diphosphate kinase (147 aa).

6 residues coordinate ATP: lysine 9, phenylalanine 57, arginine 85, threonine 91, arginine 102, and asparagine 112. Residue histidine 115 is the Pros-phosphohistidine intermediate of the active site.

This sequence belongs to the NDK family. Homotetramer. It depends on Mg(2+) as a cofactor.

The protein resides in the cytoplasm. It catalyses the reaction a 2'-deoxyribonucleoside 5'-diphosphate + ATP = a 2'-deoxyribonucleoside 5'-triphosphate + ADP. It carries out the reaction a ribonucleoside 5'-diphosphate + ATP = a ribonucleoside 5'-triphosphate + ADP. Major role in the synthesis of nucleoside triphosphates other than ATP. The ATP gamma phosphate is transferred to the NDP beta phosphate via a ping-pong mechanism, using a phosphorylated active-site intermediate. The protein is Nucleoside diphosphate kinase of Thermosipho melanesiensis (strain DSM 12029 / CIP 104789 / BI429).